The following is a 401-amino-acid chain: Probable trafficking protein particle complex subunit 13 homolog (401 aa).

This sequence belongs to the TRAPPC13 family.

The chain is Probable trafficking protein particle complex subunit 13 homolog from Caenorhabditis elegans.